Here is a 40-residue protein sequence, read N- to C-terminus: Large ribosomal subunit protein bL33c (40 aa).

It belongs to the bacterial ribosomal protein bL33 family.

It is found in the plastid. The protein resides in the chloroplast. This is Large ribosomal subunit protein bL33c (rpl33) from Pisum sativum (Garden pea).